A 294-amino-acid polypeptide reads, in one-letter code: MKNIDLTNWKLLAEIYEYLFFFSFFFLCLLVIIVVKFNNSTVGREYTFSTFSGMLVYILLLPVKMGMLTKMWDVSTDYCIILMFLSDFSFIFSSWALTLLALERINNFSFSEIKVNETKILKQMSFPIIWVTSIFQAVQISMKYKKSQMNLEDDYCLLAIERSAEEAWILLMYTVVIPTFIVFFYVLNKRFLFLERDLNSIVTHLSLFLFFGALCFFPASVLNEFNCNRLFYGLHELLIVCLELKIFYVPTMTYIISCENYRLAAKAFFCKCFKPCFLMPSLRKLQQPTKSTQF.

Topologically, residues 1 to 14 (MKNIDLTNWKLLAE) are extracellular. The chain crosses the membrane as a helical span at residues 15-35 (IYEYLFFFSFFFLCLLVIIVV). Topologically, residues 36-47 (KFNNSTVGREYT) are cytoplasmic. The helical transmembrane segment at 48-68 (FSTFSGMLVYILLLPVKMGML) threads the bilayer. The Extracellular portion of the chain corresponds to 69–79 (TKMWDVSTDYC). Residues 80 to 102 (IILMFLSDFSFIFSSWALTLLAL) traverse the membrane as a helical segment. The Cytoplasmic segment spans residues 103-119 (ERINNFSFSEIKVNETK). A helical transmembrane segment spans residues 120–140 (ILKQMSFPIIWVTSIFQAVQI). The Extracellular segment spans residues 141-166 (SMKYKKSQMNLEDDYCLLAIERSAEE). Residues 167–187 (AWILLMYTVVIPTFIVFFYVL) traverse the membrane as a helical segment. The Cytoplasmic portion of the chain corresponds to 188-200 (NKRFLFLERDLNS). Residues 201-221 (IVTHLSLFLFFGALCFFPASV) form a helical membrane-spanning segment. Residues 222–236 (LNEFNCNRLFYGLHE) lie on the Extracellular side of the membrane. Residues 237-257 (LLIVCLELKIFYVPTMTYIIS) form a helical membrane-spanning segment. Topologically, residues 258 to 294 (CENYRLAAKAFFCKCFKPCFLMPSLRKLQQPTKSTQF) are cytoplasmic.

This sequence belongs to the G-protein coupled receptor 1 family.

It localises to the host cell membrane. The polypeptide is G-protein coupled receptor homolog U51 (U51) (Human herpesvirus 7 (strain JI) (HHV-7)).